Reading from the N-terminus, the 194-residue chain is Calcium channel flower (194 aa).

The next 3 membrane-spanning stretches (helical) occupy residues 34–54, 59–79, and 107–127; these read LLGI…VFSI, VSCL…MLLE, and GLYI…ASLF.

The protein belongs to the calcium channel flower family. Homomultimer. Associates with the dally/ magu complex.

Its subcellular location is the cell membrane. The protein resides in the cytoplasmic vesicle. The protein localises to the secretory vesicle. It is found in the synaptic vesicle membrane. It localises to the presynaptic cell membrane. Its subcellular location is the endosome. Its activity is regulated as follows. Channel activity is inhibited by La(3+), which reduces Ca(2+) influx and thus inhibits it's function in promoting activity-dependent bulk endocytosis (ADBE) in response to high stimuli. In terms of biological role, transmembrane protein which mediates synaptic endocytosis, fitness-based cell culling, neuronal culling, morphogen gradient scaling, and calcium transport. Regulates synaptic endocytosis and hence couples exo- with endocytosis. Controls two major modes of synaptic vesicle (SV) endocytosis in the synaptic boutons of neuromuscular junctions (NMJs); Ca(2+) channel-independent Clathrin-mediated endocytosis (CME) in response to mild stimulation, and Ca(2+) channel-dependent activity-dependent bulk endocytosis (ADBE) in response to strong stimulation. Functions in ADBE and subsequent SV reformation from bulk endosomes by initiating Ca(2+) channel-dependent phosphatidylinositol 4,5-bisphosphate (PtdIns(4,5)P2) compartmentalization in synaptic boutons. There it acts at the periactive zone to provide the low Ca(2+) levels required to initiate Calcineurin activation and upregulate PtdIns(4,5)P2. Conversely PtdIns(4,5)P2 enhances fwe Ca(2+) channel-activity, establishing a positive feedback loop that induces PtdIns(4,5)P2 microdomain at the periactive zone. These microdomains trigger bulk membrane invagination (i.e. ADBE) by triggering actin polymerization while also promoting localization of fwe to bulk endosomes, thereby removing the ADBE trigger to reduce endocytosis and prevent excess membrane uptake. PtdIns(4,5)P2 then promotes SV reformation from the bulk endosomes, to coordinate ADBE and subsequent SV reformation. Different combinations of the flower isoforms at the cell membrane are also required for the identification and elimination of suboptimal or supernumerary cells during development, regeneration, and adulthood. Required for the recognition and elimination of unfit cells in the developing wing during cell competition. In the developing pupal retina, mediates the elimination of unwanted postmitotic neurons, including supernumerary photoreceptor neurons that form at the periphery of the retina and are contained within incomplete ommatidia units. Also required for efficient elimination and replacement of old neurons by newly generated neurons during regeneration in the adult brain following mechanical injury. Downstream of the flower fitness fingerprints, cells identified as unwanted or unfit are eliminated via apoptosis through the expression of ahuizotl (azot). However, the cells marked for elimination by the flower isoforms only undergo apoptosis if additional thresholds are met; (1) their neighboring fit/healthy cells express different levels of the fwe isoforms, and (2) the levels of the protective signal SPARC expressed by the loser or unwanted cells are unable to inhibit caspase activation. These additional thresholds for flower-mediated apoptosis, allows useful cells to recover from transient and limited stress before they are unnecessarily eliminated. Functions with dally and magu in a mechanism of scaling, which utilises apoptosis to ensure that the dpp morphogen gradient, which mediates organ growth, remains proportional to the size of the growing wing. In this mechanism, fwe represses dally- and Magu-dependent activity in expanding the gradient, and dally/Magu inhibits fwe-dependent apoptosis to keep cell death rate low. When the levels of these different proteins are optimally regulated the gradient correctly scales with organ growth but when this fails, fwe-mediated apoptosis is activated to trim the developing tissue to match the correct size of the gradient. This Drosophila erecta (Fruit fly) protein is Calcium channel flower.